We begin with the raw amino-acid sequence, 90 residues long: Co-chaperonin GroES (90 aa).

It belongs to the GroES chaperonin family. As to quaternary structure, heptamer of 7 subunits arranged in a ring. Interacts with the chaperonin GroEL.

It is found in the cytoplasm. Functionally, together with the chaperonin GroEL, plays an essential role in assisting protein folding. The GroEL-GroES system forms a nano-cage that allows encapsulation of the non-native substrate proteins and provides a physical environment optimized to promote and accelerate protein folding. GroES binds to the apical surface of the GroEL ring, thereby capping the opening of the GroEL channel. This chain is Co-chaperonin GroES, found in Bacteroides fragilis (strain ATCC 25285 / DSM 2151 / CCUG 4856 / JCM 11019 / LMG 10263 / NCTC 9343 / Onslow / VPI 2553 / EN-2).